The chain runs to 316 residues: Phospho-N-acetylmuramoyl-pentapeptide-transferase (316 aa).

Helical transmembrane passes span 5-25 (IIFATLLSFTVAIISGRFFIP), 52-72 (TMGGIIFVVATFLTSLIFSPW), 76-96 (LFILLAGFLGYGLIGFADDFL), 116-136 (FLLAIVISWFIKSNVGTEIIV), 145-165 (LANFYIPFAVFIIVGTVNSVN), 172-192 (GLAAGVSTIVMAFFAMIALFL), 195-212 (VTYGVFSASLTGGLLGFL), 221-241 (VFMGDTGSLAIGGAVATVALL), 244-264 (LPLILPVLGIIYVAEAISVIL), and 296-316 (VVYSFWLVTLIALFVSFYSLS).

It belongs to the glycosyltransferase 4 family. MraY subfamily. It depends on Mg(2+) as a cofactor.

The protein resides in the cell membrane. The catalysed reaction is UDP-N-acetyl-alpha-D-muramoyl-L-alanyl-gamma-D-glutamyl-meso-2,6-diaminopimeloyl-D-alanyl-D-alanine + di-trans,octa-cis-undecaprenyl phosphate = di-trans,octa-cis-undecaprenyl diphospho-N-acetyl-alpha-D-muramoyl-L-alanyl-D-glutamyl-meso-2,6-diaminopimeloyl-D-alanyl-D-alanine + UMP. It functions in the pathway cell wall biogenesis; peptidoglycan biosynthesis. Catalyzes the initial step of the lipid cycle reactions in the biosynthesis of the cell wall peptidoglycan: transfers peptidoglycan precursor phospho-MurNAc-pentapeptide from UDP-MurNAc-pentapeptide onto the lipid carrier undecaprenyl phosphate, yielding undecaprenyl-pyrophosphoryl-MurNAc-pentapeptide, known as lipid I. This chain is Phospho-N-acetylmuramoyl-pentapeptide-transferase, found in Caldanaerobacter subterraneus subsp. tengcongensis (strain DSM 15242 / JCM 11007 / NBRC 100824 / MB4) (Thermoanaerobacter tengcongensis).